A 321-amino-acid chain; its full sequence is MNLYGLVADIGGTNARLALCNLENGVIERIETYSAKQHAGLESIISHYLAEQKTVVTYACIAIACPINGDWVEMTNHQWAFSISELKRTLGLEKLDVINDFTAVSMAIPMLTEEYKLQLGGGEAVKDKPIAVYGAGTGLGVAHLIKVDKQWVSLPGEGGHVDFAANSEEQDAILAVLRRKFGHVSVERILSGSGLVNLYQAIAILDHRQPEDLEPETVTQRALDKSCQYCHRALTLFCEIMGRFGGNLALNMGTFGGVYIAGGIVPRFLDFFRQSNFLHGFEDKGRFKPLVQQIPVYLITHPQPGLLGSGTYLRQQLSLID.

8-13 (ADIGGT) provides a ligand contact to ATP.

Belongs to the bacterial glucokinase family.

The protein resides in the cytoplasm. It carries out the reaction D-glucose + ATP = D-glucose 6-phosphate + ADP + H(+). This Photorhabdus laumondii subsp. laumondii (strain DSM 15139 / CIP 105565 / TT01) (Photorhabdus luminescens subsp. laumondii) protein is Glucokinase.